Consider the following 419-residue polypeptide: Tryptophan synthase beta chain (419 aa).

Lys98 carries the N6-(pyridoxal phosphate)lysine modification.

Belongs to the TrpB family. In terms of assembly, tetramer of two alpha and two beta chains. Requires pyridoxal 5'-phosphate as cofactor.

The catalysed reaction is (1S,2R)-1-C-(indol-3-yl)glycerol 3-phosphate + L-serine = D-glyceraldehyde 3-phosphate + L-tryptophan + H2O. It functions in the pathway amino-acid biosynthesis; L-tryptophan biosynthesis; L-tryptophan from chorismate: step 5/5. The beta subunit is responsible for the synthesis of L-tryptophan from indole and L-serine. This is Tryptophan synthase beta chain from Ruegeria sp. (strain TM1040) (Silicibacter sp.).